We begin with the raw amino-acid sequence, 277 residues long: Phosphate import ATP-binding protein PstB (277 aa).

In terms of domain architecture, ABC transporter spans 31-272 (IEVPGLSLFY…PAKKQTEDYI (242 aa)). 63 to 70 (GPSGCGKS) provides a ligand contact to ATP.

Belongs to the ABC transporter superfamily. Phosphate importer (TC 3.A.1.7) family. The complex is composed of two ATP-binding proteins (PstB), two transmembrane proteins (PstC and PstA) and a solute-binding protein (PstS).

It is found in the cell inner membrane. The enzyme catalyses phosphate(out) + ATP + H2O = ADP + 2 phosphate(in) + H(+). In terms of biological role, part of the ABC transporter complex PstSACB involved in phosphate import. Responsible for energy coupling to the transport system. The chain is Phosphate import ATP-binding protein PstB from Pseudomonas fluorescens (strain Pf0-1).